Reading from the N-terminus, the 1262-residue chain is Isoleucine--tRNA ligase, cytoplasmic (1262 aa).

The residue at position 1 (methionine 1) is an N-acetylmethionine. The 'HIGH' region signature appears at 48 to 58 (PFATGLPHYGH). The 'KMSKS' region signature appears at 600–604 (KMSKR). Lysine 603 contacts ATP. Phosphoserine is present on serine 1049. Position 1058 is a phosphothreonine (threonine 1058).

It belongs to the class-I aminoacyl-tRNA synthetase family. Part of a multisubunit complex that groups tRNA ligases for Arg (RARS1), Asp (DARS1), Gln (QARS1), Ile (IARS1), Leu (LARS1), Lys (KARS1), Met (MARS1) the bifunctional ligase for Glu and Pro (EPRS1) and the auxiliary subunits AIMP1/p43, AIMP2/p38 and EEF1E1/p18.

The protein localises to the cytoplasm. Its subcellular location is the cytosol. It carries out the reaction tRNA(Ile) + L-isoleucine + ATP = L-isoleucyl-tRNA(Ile) + AMP + diphosphate. In terms of biological role, catalyzes the specific attachment of an amino acid to its cognate tRNA in a 2 step reaction: the amino acid (AA) is first activated by ATP to form AA-AMP and then transferred to the acceptor end of the tRNA. This chain is Isoleucine--tRNA ligase, cytoplasmic (Iars1), found in Mus musculus (Mouse).